The sequence spans 273 residues: Glutamate racemase (273 aa).

Substrate-binding positions include 11–12 (DS) and 43–44 (YG). Cys74 functions as the Proton donor/acceptor in the catalytic mechanism. 75 to 76 (NT) lines the substrate pocket. Cys185 (proton donor/acceptor) is an active-site residue. A substrate-binding site is contributed by 186–187 (TH).

The protein belongs to the aspartate/glutamate racemases family. In terms of assembly, homodimer.

It catalyses the reaction L-glutamate = D-glutamate. It participates in cell wall biogenesis; peptidoglycan biosynthesis. Functionally, provides the (R)-glutamate required for cell wall biosynthesis. This Enterococcus faecalis (strain ATCC 700802 / V583) protein is Glutamate racemase.